We begin with the raw amino-acid sequence, 179 residues long: ATP synthase subunit delta (179 aa).

It belongs to the ATPase delta chain family. In terms of assembly, F-type ATPases have 2 components, F(1) - the catalytic core - and F(0) - the membrane proton channel. F(1) has five subunits: alpha(3), beta(3), gamma(1), delta(1), epsilon(1). F(0) has three main subunits: a(1), b(2) and c(10-14). The alpha and beta chains form an alternating ring which encloses part of the gamma chain. F(1) is attached to F(0) by a central stalk formed by the gamma and epsilon chains, while a peripheral stalk is formed by the delta and b chains.

Its subcellular location is the cell membrane. In terms of biological role, f(1)F(0) ATP synthase produces ATP from ADP in the presence of a proton or sodium gradient. F-type ATPases consist of two structural domains, F(1) containing the extramembraneous catalytic core and F(0) containing the membrane proton channel, linked together by a central stalk and a peripheral stalk. During catalysis, ATP synthesis in the catalytic domain of F(1) is coupled via a rotary mechanism of the central stalk subunits to proton translocation. Its function is as follows. This protein is part of the stalk that links CF(0) to CF(1). It either transmits conformational changes from CF(0) to CF(1) or is implicated in proton conduction. The sequence is that of ATP synthase subunit delta from Listeria monocytogenes serovar 1/2a (strain ATCC BAA-679 / EGD-e).